We begin with the raw amino-acid sequence, 160 residues long: Transcription elongation factor GreA (160 aa).

A coiled-coil region spans residues 2-30; sequence SEKTYPMTLAEKEQLEQELEELKLVRRPE.

The protein belongs to the GreA/GreB family.

Its function is as follows. Necessary for efficient RNA polymerase transcription elongation past template-encoded arresting sites. The arresting sites in DNA have the property of trapping a certain fraction of elongating RNA polymerases that pass through, resulting in locked ternary complexes. Cleavage of the nascent transcript by cleavage factors such as GreA or GreB allows the resumption of elongation from the new 3'terminus. GreA releases sequences of 2 to 3 nucleotides. In Streptococcus mutans serotype c (strain ATCC 700610 / UA159), this protein is Transcription elongation factor GreA.